A 421-amino-acid polypeptide reads, in one-letter code: Acylglycerol kinase, mitochondrial (421 aa).

Lysine 6 is modified (N6-acetyllysine). Positions 15-31 (TTAGLCLLTWGGHWLYG) are hydrophobic. Positions 58–199 (AQVKKATVFL…LDVLQIKGEK (142 aa)) constitute a DAGKc domain. A disordered region spans residues 252-271 (ISYTGPRERPPIEPEETPPR).

It belongs to the AGK family. As to quaternary structure, component of the TIM22 complex, which core is composed of TIMM22, associated with TIMM10 (TIMM10A and/or TIMM10B), TIMM9, AGK and TIMM29. Interacts with SMIM26. Requires Mg(2+) as cofactor. As to expression, ubiquitously expressed.

It localises to the mitochondrion inner membrane. Its subcellular location is the mitochondrion intermembrane space. It carries out the reaction a monoacylglycerol + ATP = a monoacyl-sn-glycero-3-phosphate + ADP + H(+). It catalyses the reaction a 1,2-diacyl-sn-glycerol + ATP = a 1,2-diacyl-sn-glycero-3-phosphate + ADP + H(+). The catalysed reaction is an N-acylsphing-4-enine + ATP = an N-acylsphing-4-enine 1-phosphate + ADP + H(+). The enzyme catalyses 1,2-di-(9Z-octadecenoyl)-sn-glycerol + ATP = 1,2-di-(9Z-octadecenoyl)-sn-glycero-3-phosphate + ADP + H(+). It carries out the reaction 1-(9Z-octadecenoyl)-sn-glycerol + ATP = 1-(9Z-octadecenoyl)-sn-glycero-3-phosphate + ADP + H(+). It catalyses the reaction 1-(5Z,8Z,11Z,14Z-eicosatetraenoyl)-sn-glycerol + ATP = 1-(5Z,8Z,11Z,14Z-eicosatetraenoyl)-sn-glycero-3-phosphate + ADP + H(+). The catalysed reaction is a 1-acyl-sn-glycerol + ATP = a 1-acyl-sn-glycero-3-phosphate + ADP + H(+). The enzyme catalyses 1-hexadecanoyl-sn-glycerol + ATP = 1-hexadecanoyl-sn-glycero-3-phosphate + ADP + H(+). It carries out the reaction a 2-acylglycerol + ATP = a 2-acyl-sn-glycerol 3-phosphate + ADP + H(+). It catalyses the reaction 2-(5Z,8Z,11Z,14Z-eicosatetraenoyl)-glycerol + ATP = 2-(5Z,8Z,11Z,14Z-eicosatetraenoyl)-sn-glycero-3-phosphate + ADP + H(+). The catalysed reaction is N-(hexanoyl)sphing-4-enine + ATP = N-hexanoylsphing-4-enine 1-phosphate + ADP + H(+). The protein operates within lipid metabolism; glycerolipid metabolism. Both the ceramide and diacylglycerol kinase activities are inhibited by sphingosine and stimulated by cardiolipin. Both activities are stimulated by calcium when magnesium concentrations are low but inhibited by calcium when magnesium concentrations are high. In terms of biological role, lipid kinase that can phosphorylate both monoacylglycerol and diacylglycerol to form lysophosphatidic acid (LPA) and phosphatidic acid (PA), respectively. Phosphorylates ceramide but not sphingosine. Phosphorylates 1,2-dioleoylglycerol more rapidly than 2,3-dioleoylglycerol. Independently of its lipid kinase activity, acts as a component of the TIM22 complex. The TIM22 complex mediates the import and insertion of multi-pass transmembrane proteins into the mitochondrial inner membrane by forming a twin-pore translocase that uses the membrane potential as the external driving force. In the TIM22 complex, required for the import of a subset of metabolite carriers into mitochondria, such as ANT1/SLC25A4 and SLC25A24, while it is not required for the import of TIMM23. Overexpression increases the formation and secretion of LPA, resulting in transactivation of EGFR and activation of the downstream MAPK signaling pathway, leading to increased cell growth. In Mus musculus (Mouse), this protein is Acylglycerol kinase, mitochondrial.